A 175-amino-acid chain; its full sequence is Large ribosomal subunit protein uL30 (175 aa).

It belongs to the universal ribosomal protein uL30 family. As to quaternary structure, part of the 50S ribosomal subunit.

This Pyrobaculum neutrophilum (strain DSM 2338 / JCM 9278 / NBRC 100436 / V24Sta) (Thermoproteus neutrophilus) protein is Large ribosomal subunit protein uL30.